Reading from the N-terminus, the 93-residue chain is Co-chaperonin GroES 2 (93 aa).

The interval 1 to 20 (MQPLGERIVVQREESETTTA) is disordered.

Belongs to the GroES chaperonin family. Heptamer of 7 subunits arranged in a ring. Interacts with the chaperonin GroEL.

Its subcellular location is the cytoplasm. In terms of biological role, together with the chaperonin GroEL, plays an essential role in assisting protein folding. The GroEL-GroES system forms a nano-cage that allows encapsulation of the non-native substrate proteins and provides a physical environment optimized to promote and accelerate protein folding. GroES binds to the apical surface of the GroEL ring, thereby capping the opening of the GroEL channel. This Rhodopirellula baltica (strain DSM 10527 / NCIMB 13988 / SH1) protein is Co-chaperonin GroES 2.